Consider the following 148-residue polypeptide: Deoxyuridine 5'-triphosphate nucleotidohydrolase (148 aa).

Residues 67–69 (RSG), N80, 84–86 (LID), and M94 each bind substrate.

The protein belongs to the dUTPase family. Mg(2+) is required as a cofactor.

It catalyses the reaction dUTP + H2O = dUMP + diphosphate + H(+). Its pathway is pyrimidine metabolism; dUMP biosynthesis; dUMP from dCTP (dUTP route): step 2/2. In terms of biological role, this enzyme is involved in nucleotide metabolism: it produces dUMP, the immediate precursor of thymidine nucleotides and it decreases the intracellular concentration of dUTP so that uracil cannot be incorporated into DNA. This is Deoxyuridine 5'-triphosphate nucleotidohydrolase from Burkholderia cenocepacia (strain HI2424).